We begin with the raw amino-acid sequence, 338 residues long: Holliday junction branch migration complex subunit RuvB (338 aa).

A large ATPase domain (RuvB-L) region spans residues 1–179 (MTDLTTPIRT…FGIPVRLNFY (179 aa)). The ATP site is built by L18, R19, G60, K63, T64, T65, R169, Y179, and R216. T64 lines the Mg(2+) pocket. Residues 180 to 250 (THAELEQVIG…AADAALNRLE (71 aa)) form a small ATPAse domain (RuvB-S) region. The tract at residues 253–338 (ALGLDAMDRR…AGSQDGLFDK (86 aa)) is head domain (RuvB-H). DNA contacts are provided by R289, R308, and R313.

It belongs to the RuvB family. Homohexamer. Forms an RuvA(8)-RuvB(12)-Holliday junction (HJ) complex. HJ DNA is sandwiched between 2 RuvA tetramers; dsDNA enters through RuvA and exits via RuvB. An RuvB hexamer assembles on each DNA strand where it exits the tetramer. Each RuvB hexamer is contacted by two RuvA subunits (via domain III) on 2 adjacent RuvB subunits; this complex drives branch migration. In the full resolvosome a probable DNA-RuvA(4)-RuvB(12)-RuvC(2) complex forms which resolves the HJ.

The protein localises to the cytoplasm. The enzyme catalyses ATP + H2O = ADP + phosphate + H(+). Functionally, the RuvA-RuvB-RuvC complex processes Holliday junction (HJ) DNA during genetic recombination and DNA repair, while the RuvA-RuvB complex plays an important role in the rescue of blocked DNA replication forks via replication fork reversal (RFR). RuvA specifically binds to HJ cruciform DNA, conferring on it an open structure. The RuvB hexamer acts as an ATP-dependent pump, pulling dsDNA into and through the RuvAB complex. RuvB forms 2 homohexamers on either side of HJ DNA bound by 1 or 2 RuvA tetramers; 4 subunits per hexamer contact DNA at a time. Coordinated motions by a converter formed by DNA-disengaged RuvB subunits stimulates ATP hydrolysis and nucleotide exchange. Immobilization of the converter enables RuvB to convert the ATP-contained energy into a lever motion, pulling 2 nucleotides of DNA out of the RuvA tetramer per ATP hydrolyzed, thus driving DNA branch migration. The RuvB motors rotate together with the DNA substrate, which together with the progressing nucleotide cycle form the mechanistic basis for DNA recombination by continuous HJ branch migration. Branch migration allows RuvC to scan DNA until it finds its consensus sequence, where it cleaves and resolves cruciform DNA. This chain is Holliday junction branch migration complex subunit RuvB, found in Sphingopyxis alaskensis (strain DSM 13593 / LMG 18877 / RB2256) (Sphingomonas alaskensis).